The sequence spans 173 residues: Peptide deformylase (173 aa).

Residues Cys-91 and His-133 each coordinate Fe cation. Glu-134 is an active-site residue. His-137 is a binding site for Fe cation.

This sequence belongs to the polypeptide deformylase family. The cofactor is Fe(2+).

The enzyme catalyses N-terminal N-formyl-L-methionyl-[peptide] + H2O = N-terminal L-methionyl-[peptide] + formate. Removes the formyl group from the N-terminal Met of newly synthesized proteins. Requires at least a dipeptide for an efficient rate of reaction. N-terminal L-methionine is a prerequisite for activity but the enzyme has broad specificity at other positions. This is Peptide deformylase from Blochmanniella pennsylvanica (strain BPEN).